The chain runs to 396 residues: Lipid-A-disaccharide synthase (396 aa).

Belongs to the LpxB family.

The enzyme catalyses a lipid X + a UDP-2-N,3-O-bis[(3R)-3-hydroxyacyl]-alpha-D-glucosamine = a lipid A disaccharide + UDP + H(+). It functions in the pathway bacterial outer membrane biogenesis; LPS lipid A biosynthesis. Condensation of UDP-2,3-diacylglucosamine and 2,3-diacylglucosamine-1-phosphate to form lipid A disaccharide, a precursor of lipid A, a phosphorylated glycolipid that anchors the lipopolysaccharide to the outer membrane of the cell. This is Lipid-A-disaccharide synthase from Hahella chejuensis (strain KCTC 2396).